We begin with the raw amino-acid sequence, 720 residues long: Serine/threonine-protein kinase KIN82 (720 aa).

Polar residues-rich tracts occupy residues 1–13 and 99–116; these read MTQQ…SQRL and FNHN…STSE. Disordered regions lie at residues 1 to 20 and 99 to 128; these read MTQQ…RSMS and FNHN…RSTI. Phosphoserine is present on S203. Residues 230–241 show a composition bias toward low complexity; that stretch reads SPLANLSLSNSP. The interval 230-257 is disordered; sequence SPLANLSLSNSPIDSPRKNSETRKDQIP. Basic and acidic residues predominate over residues 244–255; the sequence is SPRKNSETRKDQ. The Protein kinase domain maps to 324 to 602; that stretch reads FEKIRLLGQG…AADIKRHPFF (279 aa). ATP-binding positions include 330–338 and K353; that span reads LGQGDVGKV. The active-site Proton acceptor is the D449.

It belongs to the protein kinase superfamily. Ser/Thr protein kinase family. KIN82 subfamily.

The enzyme catalyses L-seryl-[protein] + ATP = O-phospho-L-seryl-[protein] + ADP + H(+). It carries out the reaction L-threonyl-[protein] + ATP = O-phospho-L-threonyl-[protein] + ADP + H(+). Flippase activator that phosphorylates DFN1 and DFN2 and which is involved in the generation of phospholipid asymmetry in membranes by the inward translocation of phospholipids. This Saccharomyces cerevisiae (strain ATCC 204508 / S288c) (Baker's yeast) protein is Serine/threonine-protein kinase KIN82 (KIN82).